A 236-amino-acid chain; its full sequence is Pyridoxine 5'-phosphate synthase (236 aa).

Asn6 serves as a coordination point for 3-amino-2-oxopropyl phosphate. Residue 8 to 9 (DH) coordinates 1-deoxy-D-xylulose 5-phosphate. Arg17 is a binding site for 3-amino-2-oxopropyl phosphate. His42 functions as the Proton acceptor in the catalytic mechanism. 1-deoxy-D-xylulose 5-phosphate-binding residues include Arg44 and His49. The Proton acceptor role is filled by Glu69. Residue Thr99 coordinates 1-deoxy-D-xylulose 5-phosphate. His192 serves as the catalytic Proton donor. 3-amino-2-oxopropyl phosphate is bound by residues Gly193 and 216-217 (GH).

This sequence belongs to the PNP synthase family. Homooctamer; tetramer of dimers.

The protein resides in the cytoplasm. The catalysed reaction is 3-amino-2-oxopropyl phosphate + 1-deoxy-D-xylulose 5-phosphate = pyridoxine 5'-phosphate + phosphate + 2 H2O + H(+). Its pathway is cofactor biosynthesis; pyridoxine 5'-phosphate biosynthesis; pyridoxine 5'-phosphate from D-erythrose 4-phosphate: step 5/5. Functionally, catalyzes the complicated ring closure reaction between the two acyclic compounds 1-deoxy-D-xylulose-5-phosphate (DXP) and 3-amino-2-oxopropyl phosphate (1-amino-acetone-3-phosphate or AAP) to form pyridoxine 5'-phosphate (PNP) and inorganic phosphate. In Aquifex pyrophilus, this protein is Pyridoxine 5'-phosphate synthase.